Consider the following 446-residue polypeptide: 3-phosphoshikimate 1-carboxyvinyltransferase (446 aa).

Residues 1–20 (MSTWPAPSTATPVHATVTVP) form a disordered region. Residues Lys23, Ser24, and Arg28 each contribute to the 3-phosphoshikimate site. Lys23 contributes to the phosphoenolpyruvate binding site. Positions 100 and 128 each coordinate phosphoenolpyruvate. 3-phosphoshikimate contacts are provided by Ser171, Ser172, Gln173, Ser200, Glu315, and His344. Gln173 is a phosphoenolpyruvate binding site. Glu315 acts as the Proton acceptor in catalysis. The phosphoenolpyruvate site is built by Arg348, Arg389, and Lys414.

This sequence belongs to the EPSP synthase family. In terms of assembly, monomer.

It is found in the cytoplasm. It catalyses the reaction 3-phosphoshikimate + phosphoenolpyruvate = 5-O-(1-carboxyvinyl)-3-phosphoshikimate + phosphate. Its pathway is metabolic intermediate biosynthesis; chorismate biosynthesis; chorismate from D-erythrose 4-phosphate and phosphoenolpyruvate: step 6/7. Functionally, catalyzes the transfer of the enolpyruvyl moiety of phosphoenolpyruvate (PEP) to the 5-hydroxyl of shikimate-3-phosphate (S3P) to produce enolpyruvyl shikimate-3-phosphate and inorganic phosphate. The chain is 3-phosphoshikimate 1-carboxyvinyltransferase from Mycolicibacterium vanbaalenii (strain DSM 7251 / JCM 13017 / BCRC 16820 / KCTC 9966 / NRRL B-24157 / PYR-1) (Mycobacterium vanbaalenii).